Reading from the N-terminus, the 349-residue chain is Guanine nucleotide-binding protein alpha-13 subunit (349 aa).

Gly-2 carries the N-myristoyl glycine lipid modification. Residue Cys-3 is the site of S-palmitoyl cysteine attachment. The G-alpha domain occupies 35–349; sequence SHIRLLLLGS…VFKDIMKRKR (315 aa). The G1 motif stretch occupies residues 38–51; sequence RLLLLGSAESGKTT. GTP is bound by residues 43–50, 177–183, 202–206, 271–274, and Ala-327; these read GSAESGKT, IMAYVPT, DIGGQ, and NEID. Residues 175-183 are G2 motif; sequence DLIMAYVPT. Thr-183 provides a ligand contact to Mg(2+). The interval 198-207 is G3 motif; that stretch reads FQLFDIGGQK. Residues 267 to 274 are G4 motif; the sequence is YLFLNEID. Positions 325–330 are G5 motif; it reads CIAIDT.

The protein belongs to the G-alpha family. As to quaternary structure, g proteins are composed of 3 units; alpha, beta and gamma. The alpha chain contains the guanine nucleotide binding site.

Guanine nucleotide-binding proteins (G proteins) are involved as modulators or transducers in various transmembrane signaling systems. This chain is Guanine nucleotide-binding protein alpha-13 subunit, found in Caenorhabditis briggsae.